Reading from the N-terminus, the 145-residue chain is MGFSETQEELVLRSWQSMKKDSESIALKFFLRIFEIAPAAKQMFSFLRDSGDDVPLENHPKACESATQLRKTGDVKVREATLRRLGATHVKAGVADAYFEVVKTALLDTIKDAVPEMWSPEMKGAWEEAYDQLAAAIKEEMKKAA.

Positions 2-142 constitute a Globin domain; the sequence is GFSETQEELV…LAAAIKEEMK (141 aa). The Homodimerization motif lies at 35–39; it reads EIAPA. Positions 45, 59, 61, 84, 88, and 89 each coordinate heme b. The Homodimerization signature appears at 96-108; it reads DAYFEVVKTALLD.

Belongs to the plant globin family. Homodimer. Heme b serves as cofactor. Expressed in embryonic (embryos, coleoptiles and seminal roots) and vegetative (leaves and roots) organs.

The protein resides in the cytoplasm. It is found in the nucleus. The enzyme catalyses Fe(III)-heme b-[protein] + nitric oxide + H2O = Fe(II)-heme b-[protein] + nitrite + 2 H(+). In terms of biological role, phytoglobin that reduces nitrite to nitric oxide under anoxic conditions (e.g. during flooding or in waterlogged soil). May not function as an oxygen storage or transport protein. Has an unusually high affinity for O(2) through an hexacoordinate heme iron because of a very low dissociation constant. The sequence is that of Anaerobic nitrite reductase NSHB5 from Oryza sativa subsp. japonica (Rice).